The following is a 78-amino-acid chain: MYLGIVSTACAFLLWNHGLQLLNASSGGLFFFFQPLVGTLLGWILLGEQIGGTFWIGSFLILSGVLLVIKEKEKEVKS.

3 helical membrane passes run 2–22 (YLGI…LQLL), 27–47 (GGLF…ILLG), and 49–69 (QIGG…LLVI). The EamA domain maps to 2–70 (YLGIVSTACA…ILSGVLLVIK (69 aa)).

This sequence belongs to the EamA transporter family.

It localises to the cell membrane. This chain is Putative permease-like protein YdzE (ydzE), found in Bacillus subtilis (strain 168).